We begin with the raw amino-acid sequence, 105 residues long: Small ribosomal subunit protein bS18 (105 aa).

Positions 1-34 (MMINKEQDLNQLETNQEQSVEQNQTDEKRKPKPN) are disordered. Positions 9-23 (LNQLETNQEQSVEQN) are enriched in polar residues.

This sequence belongs to the bacterial ribosomal protein bS18 family. As to quaternary structure, part of the 30S ribosomal subunit. Forms a tight heterodimer with protein bS6.

Its function is as follows. Binds as a heterodimer with protein bS6 to the central domain of the 16S rRNA, where it helps stabilize the platform of the 30S subunit. In Mycoplasma genitalium (strain ATCC 33530 / DSM 19775 / NCTC 10195 / G37) (Mycoplasmoides genitalium), this protein is Small ribosomal subunit protein bS18.